The chain runs to 286 residues: Putative chaperone BssE (286 aa).

Residues 47-54 and 108-115 contribute to the ATP site; these read GKQGCGKS and GCVIHLEE.

The protein belongs to the CbbQ/NirQ/NorQ/GpvN family.

Functionally, may have a role in assembly and/or activation of benzylsuccinate synthase. This is Putative chaperone BssE (bssE) from Thauera aromatica.